The sequence spans 118 residues: Putative pterin-4-alpha-carbinolamine dehydratase (118 aa).

It belongs to the pterin-4-alpha-carbinolamine dehydratase family.

It catalyses the reaction (4aS,6R)-4a-hydroxy-L-erythro-5,6,7,8-tetrahydrobiopterin = (6R)-L-erythro-6,7-dihydrobiopterin + H2O. This Pseudomonas savastanoi pv. phaseolicola (strain 1448A / Race 6) (Pseudomonas syringae pv. phaseolicola (strain 1448A / Race 6)) protein is Putative pterin-4-alpha-carbinolamine dehydratase.